The sequence spans 185 residues: Threonylcarbamoyl-AMP synthase (185 aa).

A YrdC-like domain is found at 5–185; it reads NWRVRLAARI…RDGRTGQRLR (181 aa).

The protein belongs to the SUA5 family. TsaC subfamily.

Its subcellular location is the cytoplasm. The catalysed reaction is L-threonine + hydrogencarbonate + ATP = L-threonylcarbamoyladenylate + diphosphate + H2O. In terms of biological role, required for the formation of a threonylcarbamoyl group on adenosine at position 37 (t(6)A37) in tRNAs that read codons beginning with adenine. Catalyzes the conversion of L-threonine, HCO(3)(-)/CO(2) and ATP to give threonylcarbamoyl-AMP (TC-AMP) as the acyladenylate intermediate, with the release of diphosphate. The polypeptide is Threonylcarbamoyl-AMP synthase (Nitrosococcus oceani (strain ATCC 19707 / BCRC 17464 / JCM 30415 / NCIMB 11848 / C-107)).